A 626-amino-acid polypeptide reads, in one-letter code: Lipoprotein LpqB (626 aa).

The N-terminal stretch at 1–23 (MIGQANRIAAAVSTACLAVLLAG) is a signal peptide. Residue Cys-24 is the site of N-palmitoyl cysteine attachment. A lipid anchor (S-diacylglycerol cysteine) is attached at Cys-24. The tract at residues 428 to 457 (EAEREEDLADDTEPGDTAVGSTERRETDRG) is disordered. Residues 430–441 (EREEDLADDTEP) show a composition bias toward acidic residues.

This sequence belongs to the LpqB lipoprotein family.

The protein resides in the cell membrane. The polypeptide is Lipoprotein LpqB (Thermobifida fusca (strain YX)).